The following is a 416-amino-acid chain: LL-diaminopimelate aminotransferase (416 aa).

Residues tyrosine 25 and glycine 52 each contribute to the substrate site. Pyridoxal 5'-phosphate contacts are provided by residues tyrosine 78, 115-116 (SK), tyrosine 140, asparagine 190, tyrosine 221, and 248-250 (SFS). Residues lysine 116, tyrosine 140, and asparagine 190 each coordinate substrate. Lysine 251 is subject to N6-(pyridoxal phosphate)lysine. Arginine 259 is a pyridoxal 5'-phosphate binding site.

It belongs to the class-I pyridoxal-phosphate-dependent aminotransferase family. As to quaternary structure, homodimer. It depends on pyridoxal 5'-phosphate as a cofactor.

It localises to the cytoplasm. The enzyme catalyses (2S,6S)-2,6-diaminopimelate + 2-oxoglutarate = (S)-2,3,4,5-tetrahydrodipicolinate + L-glutamate + H2O + H(+). The protein operates within amino-acid biosynthesis; L-lysine biosynthesis via DAP pathway; LL-2,6-diaminopimelate from (S)-tetrahydrodipicolinate (aminotransferase route): step 1/1. In terms of biological role, involved in the synthesis of meso-diaminopimelate (m-DAP or DL-DAP), required for both lysine and peptidoglycan biosynthesis. Catalyzes the direct conversion of tetrahydrodipicolinate to LL-diaminopimelate. This is LL-diaminopimelate aminotransferase (dapL) from Methanococcus maripaludis (strain DSM 14266 / JCM 13030 / NBRC 101832 / S2 / LL).